Reading from the N-terminus, the 92-residue chain is Small ribosomal subunit protein uS19c (92 aa).

It belongs to the universal ribosomal protein uS19 family.

Its subcellular location is the plastid. It localises to the chloroplast. Protein S19 forms a complex with S13 that binds strongly to the 16S ribosomal RNA. The sequence is that of Small ribosomal subunit protein uS19c from Cucumis sativus (Cucumber).